The chain runs to 181 residues: Endoribonuclease YbeY (181 aa).

Zn(2+)-binding residues include His140, His144, and His150.

This sequence belongs to the endoribonuclease YbeY family. Zn(2+) is required as a cofactor.

It localises to the cytoplasm. Functionally, single strand-specific metallo-endoribonuclease involved in late-stage 70S ribosome quality control and in maturation of the 3' terminus of the 16S rRNA. The sequence is that of Endoribonuclease YbeY from Dinoroseobacter shibae (strain DSM 16493 / NCIMB 14021 / DFL 12).